A 63-amino-acid polypeptide reads, in one-letter code: Large ribosomal subunit protein bL28A (63 aa).

Belongs to the bacterial ribosomal protein bL28 family.

This chain is Large ribosomal subunit protein bL28A, found in Nocardia farcinica (strain IFM 10152).